The primary structure comprises 605 residues: Sodium-independent sulfate anion transporter (605 aa).

Residues 1–50 are Extracellular-facing; it reads MPSSLKGLGQAWLSSSSMALSACCSVSAWQKRLPVLAWLPRYSLQWLKMD. Residues 51–71 traverse the membrane as a helical segment; that stretch reads FIAGLSVGLTVIPQALAYAEV. A72 is a topological domain (cytoplasmic). Residues 73-93 form a helical membrane-spanning segment; the sequence is GLPPQYGLYSAFTGCFVYVFL. The Extracellular portion of the chain corresponds to 94–98; that stretch reads GTSRD. A helical transmembrane segment spans residues 99–119; that stretch reads VTLGPTAIMSLLVSFYTFHEP. Topologically, residues 120 to 122 are cytoplasmic; sequence AYA. A helical membrane pass occupies residues 123 to 143; that stretch reads VLLTFLSGCIQLAMGLLHLGF. At 144-146 the chain is on the extracellular side; that stretch reads LLD. Residues 147–167 form a helical membrane-spanning segment; the sequence is FISCPVIKGFTSAAAIIIGFG. Residues 168 to 196 are Cytoplasmic-facing; it reads QIKNLLGLHNIPRQFFLQVYHTFLSVGET. A helical membrane pass occupies residues 197–217; that stretch reads RLGDAILGLVCMVLLLVLKLM. Residues 218–249 are Extracellular-facing; sequence RDRIPPVHPEMPLCVRLSCGLVWTTATARNAL. Residues 250–270 traverse the membrane as a helical segment; that stretch reads VVSFAALVAYSFEVTGYQPFI. The Cytoplasmic segment spans residues 271–303; that stretch reads LTGEIAKGLPPVRVPPFSVTMANGTVSFTRMVQ. The chain crosses the membrane as a helical span at residues 304–324; sequence DLGAGLAVVPLIGLLESIAVA. The Extracellular segment spans residues 325 to 340; sequence KAFASQNDYHVDANQE. A helical membrane pass occupies residues 341–361; that stretch reads LLAIGLTNMLGSFVSSYPITG. The Cytoplasmic portion of the chain corresponds to 362-373; sequence SFGRTAVNAQSG. A helical transmembrane segment spans residues 374 to 394; sequence VCTPAGGLVTGALVLLSLDYL. The Extracellular portion of the chain corresponds to 395–397; the sequence is TSL. A helical transmembrane segment spans residues 398–418; the sequence is FYYIPKAALAAVIIMAVVPLF. Residues 419–447 lie on the Cytoplasmic side of the membrane; sequence DTKIFGMLWRVKRLDLLPLCATFLLCFWE. The chain crosses the membrane as a helical span at residues 448–468; that stretch reads VQYGILAGTLVSTLFLLHFVA. The Extracellular portion of the chain corresponds to 469 to 605; it reads RPKTQVSEGP…PEHKVTLLTA (137 aa). In terms of domain architecture, STAS spans 479–582; the sequence is VLILQLASGL…EKAEQYVRQE (104 aa).

It belongs to the SLC26A/SulP transporter (TC 2.A.53) family.

Its subcellular location is the cell membrane. The protein localises to the lysosome membrane. The protein resides in the apical cell membrane. It localises to the basolateral cell membrane. The enzyme catalyses hydrogencarbonate(in) + chloride(out) = hydrogencarbonate(out) + chloride(in). The catalysed reaction is sulfate(in) + H(+)(in) = sulfate(out) + H(+)(out). It carries out the reaction oxalate(in) + chloride(out) = oxalate(out) + chloride(in). Its function is as follows. Sodium-independent anion exchanger mediating bicarbonate, chloride, sulfate and oxalate transport. Exhibits sodium-independent sulfate anion transporter activity that may cooperate with SLC26A2 to mediate DIDS-sensitive sulfate uptake into high endothelial venules endothelial cells (HEVEC). In the kidney, mediates chloride-bicarbonate exchange, facilitating V-ATPase-mediated acid secretion. May function as a chloride channel, playing an important role in moderating chloride homeostasis and neuronal activity in the cerebellum. The sequence is that of Sodium-independent sulfate anion transporter (Slc26a11) from Cavia porcellus (Guinea pig).